We begin with the raw amino-acid sequence, 260 residues long: Flap endonuclease Xni (260 aa).

Residue Asp109 participates in Mg(2+) binding. Positions 165 to 259 (VKPSQLADYW…DIRFTGPNKA (95 aa)) constitute a 5'-3' exonuclease domain. Positions 176, 185, 187, and 190 each coordinate K(+). Positions 189-194 (GVGPKA) are interaction with DNA.

It belongs to the Xni family. Mg(2+) is required as a cofactor. Requires K(+) as cofactor.

Has flap endonuclease activity. During DNA replication, flap endonucleases cleave the 5'-overhanging flap structure that is generated by displacement synthesis when DNA polymerase encounters the 5'-end of a downstream Okazaki fragment. The protein is Flap endonuclease Xni of Vibrio campbellii (strain ATCC BAA-1116).